Consider the following 536-residue polypeptide: Velvet complex subunit B (536 aa).

Polar residues predominate over residues 1-26; the sequence is MIQRTTDPAAGSSTSGPPTNSLSWGS. Disordered regions lie at residues 1 to 27, 106 to 143, 157 to 409, and 508 to 536; these read MIQR…WGSR, PNAA…AIPF, SAPA…RTLV, and KLPL…EESD. The 488-residue stretch at 25–512 folds into the Velvet domain; it reads GSRHNGKLYT…NQQNMKLPLR (488 aa). Pro residues predominate over residues 114-143; sequence PPMPAKPRRPTNPPPPSNTHGSPPAPAIPF. Composition is skewed to low complexity over residues 158–170 and 190–265; these read APAS…SASA and PYGP…YPPY. Over residues 280–305 the composition is skewed to polar residues; the sequence is TSNFDHSQPVTSSVDQETNSPVVTTT. The span at 306–315 shows a compositional bias: basic and acidic residues; it reads ARDDDQREGE. Residues 328 to 342 are compositionally biased toward low complexity; sequence PSNSGAPSTSPTAST. The span at 356–399 shows a compositional bias: basic and acidic residues; the sequence is EEREGPDGGPDLREPIEPGSTKAREEEDARTGTEKGDPKDKSDA. A compositionally biased stretch (polar residues) spans 400-409; that stretch reads QRATYTRTLV. Residues 511-525 show a composition bias toward basic residues; sequence LRNRHGSGSKRRRRG.

The protein belongs to the velvet family. VelB subfamily. As to quaternary structure, component of the heterotrimeric velvet complex composed of laeA, veA and velB; VeA acting as a bridging protein between laeA and velB. Forms a heterodimeric complex with vosA; the formation of the velB-vosA complex is light-dependent.

The protein localises to the nucleus. It is found in the cytoplasm. Component of the velvet transcription factor complex that controls sexual/asexual developmental ratio in response to light, promoting sexual development in the darkness while stimulating asexual sporulation under illumination. The velvet complex acts as a global regulator for secondary metabolite gene expression. Component of the velB-VosA heterodimeric complex that plays a dual role in activating genes associated with spore maturation and repressing certain development-associated genes. The velB-VosA complex binds DNA through the DNA-binding domain of vosA that recognizes an 11-nucleotide consensus sequence 5'-CTGGCCGCGGC-3' consisting of two motifs in the promoters of key developmental regulatory genes. The polypeptide is Velvet complex subunit B (Schizophyllum commune (strain H4-8 / FGSC 9210) (Split gill fungus)).